Here is a 325-residue protein sequence, read N- to C-terminus: Eukaryotic translation initiation factor 3 subunit I (325 aa).

WD repeat units follow at residues 8 to 47 (GHER…RLGT), 50 to 91 (GHTG…ALLK), 144 to 183 (CNDS…VLVN), and 186 to 225 (EHSR…HQKT). Residue T219 is modified to Phosphothreonine. The residue at position 264 (K264) is an N6-acetyllysine. K282 is covalently cross-linked (Glycyl lysine isopeptide (Lys-Gly) (interchain with G-Cter in ubiquitin)). One copy of the WD 5 repeat lies at 283-324 (GHFGPINSVAFHPDGKSYSSGGEDGYVRIHYFDPQYFEFEFE). Position 308 is a phosphotyrosine (Y308).

The protein belongs to the eIF-3 subunit I family. As to quaternary structure, component of the eukaryotic translation initiation factor 3 (eIF-3) complex, which is composed of 13 subunits: EIF3A, EIF3B, EIF3C, EIF3D, EIF3E, EIF3F, EIF3G, EIF3H, EIF3I, EIF3J, EIF3K, EIF3L and EIF3M. The eIF-3 complex appears to include 3 stable modules: module A is composed of EIF3A, EIF3B, EIF3G and EIF3I; module B is composed of EIF3F, EIF3H, and EIF3M; and module C is composed of EIF3C, EIF3D, EIF3E, EIF3K and EIF3L. EIF3C of module C binds EIF3B of module A and EIF3H of module B, thereby linking the three modules. EIF3J is a labile subunit that binds to the eIF-3 complex via EIF3B. The eIF-3 complex interacts with RPS6KB1 under conditions of nutrient depletion. Mitogenic stimulation leads to binding and activation of a complex composed of MTOR and RPTOR, leading to phosphorylation and release of RPS6KB1 and binding of EIF4B to eIF-3. Phosphorylated by TGF-beta type II receptor.

It is found in the cytoplasm. In terms of biological role, component of the eukaryotic translation initiation factor 3 (eIF-3) complex, which is required for several steps in the initiation of protein synthesis. The eIF-3 complex associates with the 40S ribosome and facilitates the recruitment of eIF-1, eIF-1A, eIF-2:GTP:methionyl-tRNAi and eIF-5 to form the 43S pre-initiation complex (43S PIC). The eIF-3 complex stimulates mRNA recruitment to the 43S PIC and scanning of the mRNA for AUG recognition. The eIF-3 complex is also required for disassembly and recycling of post-termination ribosomal complexes and subsequently prevents premature joining of the 40S and 60S ribosomal subunits prior to initiation. The eIF-3 complex specifically targets and initiates translation of a subset of mRNAs involved in cell proliferation, including cell cycling, differentiation and apoptosis, and uses different modes of RNA stem-loop binding to exert either translational activation or repression. The chain is Eukaryotic translation initiation factor 3 subunit I from Bos taurus (Bovine).